A 544-amino-acid chain; its full sequence is Phenylalanine--tRNA ligase beta subunit (544 aa).

Residues 270 to 346 enclose the B5 domain; that stretch reads LEPKTRFLTK…KGYGYENIKV (77 aa). D324, D330, E333, and D334 together coordinate Mg(2+).

The protein belongs to the phenylalanyl-tRNA synthetase beta subunit family. Type 2 subfamily. In terms of assembly, tetramer of two alpha and two beta subunits. Mg(2+) is required as a cofactor.

The protein localises to the cytoplasm. The catalysed reaction is tRNA(Phe) + L-phenylalanine + ATP = L-phenylalanyl-tRNA(Phe) + AMP + diphosphate + H(+). In Methanosarcina barkeri (strain Fusaro / DSM 804), this protein is Phenylalanine--tRNA ligase beta subunit.